A 341-amino-acid chain; its full sequence is Uroporphyrinogen decarboxylase (341 aa).

Residues 25–29 (RQAGR), phenylalanine 44, aspartate 74, tyrosine 151, serine 206, and histidine 318 each bind substrate.

This sequence belongs to the uroporphyrinogen decarboxylase family. Homodimer.

Its subcellular location is the cytoplasm. The enzyme catalyses uroporphyrinogen III + 4 H(+) = coproporphyrinogen III + 4 CO2. It participates in porphyrin-containing compound metabolism; protoporphyrin-IX biosynthesis; coproporphyrinogen-III from 5-aminolevulinate: step 4/4. In terms of biological role, catalyzes the decarboxylation of four acetate groups of uroporphyrinogen-III to yield coproporphyrinogen-III. The protein is Uroporphyrinogen decarboxylase of Flavobacterium johnsoniae (strain ATCC 17061 / DSM 2064 / JCM 8514 / BCRC 14874 / CCUG 350202 / NBRC 14942 / NCIMB 11054 / UW101) (Cytophaga johnsonae).